The sequence spans 133 residues: Large ribosomal subunit protein uL22 (133 aa).

This sequence belongs to the universal ribosomal protein uL22 family. Part of the 50S ribosomal subunit.

Its function is as follows. This protein binds specifically to 23S rRNA; its binding is stimulated by other ribosomal proteins, e.g. L4, L17, and L20. It is important during the early stages of 50S assembly. It makes multiple contacts with different domains of the 23S rRNA in the assembled 50S subunit and ribosome. Functionally, the globular domain of the protein is located near the polypeptide exit tunnel on the outside of the subunit, while an extended beta-hairpin is found that lines the wall of the exit tunnel in the center of the 70S ribosome. The polypeptide is Large ribosomal subunit protein uL22 (Aquifex aeolicus (strain VF5)).